A 472-amino-acid chain; its full sequence is GTPase Der (472 aa).

EngA-type G domains lie at 3–166 (PIIA…IQNN) and 188–361 (IKLA…HCST). GTP contacts are provided by residues 9–16 (GRPNVGKS), 56–60 (DTGGI), 118–121 (NKID), 194–201 (GSSNVGKS), 241–245 (DTAGL), and 306–309 (NKWD). In terms of domain architecture, KH-like spans 362–446 (KRISTALLTK…PIRIQFNEPA (85 aa)).

Belongs to the TRAFAC class TrmE-Era-EngA-EngB-Septin-like GTPase superfamily. EngA (Der) GTPase family. Associates with the 50S ribosomal subunit.

GTPase that plays an essential role in the late steps of ribosome biogenesis. This chain is GTPase Der, found in Baumannia cicadellinicola subsp. Homalodisca coagulata.